The chain runs to 838 residues: V-type proton ATPase 116 kDa subunit a 1 (838 aa).

The Cytoplasmic segment spans residues 1 to 388 (MGELFRSEEM…DAYGIGTYRE (388 aa)). Thr-250 and Thr-360 each carry phosphothreonine. Residue Tyr-364 is modified to Phosphotyrosine. A helical transmembrane segment spans residues 389–407 (INPAPYTIITFPFLFAVMF). Topologically, residues 408-409 (GD) are vacuolar. A helical membrane pass occupies residues 410-426 (LGHGILMTLFAVWMVLK). Over 427–441 (ESRILSQKNENEMFS) the chain is Cytoplasmic. The helical transmembrane segment at 442 to 471 (TIFSGRYIILLMGVFSIYTGLIYNDCFSKS) threads the bilayer. Over 472–535 (LNIFGSSWSV…ATNKLTFLNS (64 aa)) the chain is Vacuolar. The chain crosses the membrane as a helical span at residues 536–555 (FKMKMSVILGIIHMLFGVSL). The Cytoplasmic segment spans residues 556–573 (SLFNHTYFKKPLNIYFGF). Residues 574–594 (IPEIIFMTSLFGYLVILIFYK) form a helical membrane-spanning segment. Over 595–639 (WTAYNAKTSEKAPSLLIHFINMFLFSYGDSGNSMLYSGQKGIQCF) the chain is Vacuolar. A helical transmembrane segment spans residues 640 to 659 (LVVVALLCVPWMLLFKPLVL). The Cytoplasmic segment spans residues 660 to 725 (RRQYLRRKHL…DTMVHQAIHT (66 aa)). The chain crosses the membrane as a helical span at residues 726 to 750 (IEYCLGCISNTASYLRLWALSLAHA). Topologically, residues 751–771 (QLSEVLWTMVIHIGLKVKSLA) are vacuolar. Residues 772-810 (GGLALFFIFAAFATLTVAILLIMEGLSAFLHALRLHWVE) form a helical membrane-spanning segment. Residues 811–838 (FQNKFYSGTGFKFLPFSFEHIREGKFDD) are Cytoplasmic-facing.

It belongs to the V-ATPase 116 kDa subunit family. As to quaternary structure, V-ATPase is a heteromultimeric enzyme made up of two complexes: the ATP-hydrolytic V1 complex and the proton translocation V0 complex. The V1 complex consists of three catalytic AB heterodimers that form a heterohexamer, three peripheral stalks each consisting of EG heterodimers, one central rotor including subunits D and F, and the regulatory subunits C and H. The proton translocation complex V0 consists of the proton transport subunit a, a ring of proteolipid subunits c9c'', rotary subunit d, subunits e and f, and the accessory subunits ATP6AP1/Ac45 and ATP6AP2/PRR. Interacts with SPAAR. Expressed in brain (at protein level). As to expression, expressed heart, kidney, liver, spleen, and to a lesser extent in brain.

Its subcellular location is the cytoplasmic vesicle. The protein localises to the clathrin-coated vesicle membrane. The protein resides in the secretory vesicle. It is found in the synaptic vesicle membrane. It localises to the melanosome. Functionally, subunit of the V0 complex of vacuolar(H+)-ATPase (V-ATPase), a multisubunit enzyme composed of a peripheral complex (V1) that hydrolyzes ATP and a membrane integral complex (V0) that translocates protons. V-ATPase is responsible for the acidification of various organelles, such as lysosomes, endosomes, the trans-Golgi network, and secretory granules, including synaptic vesicles. In certain cell types, can be exported to the plasma membrane, where it is involved in the acidification of the extracellular environment. Required for assembly and activity of the vacuolar ATPase. Through its action on compartment acidification, plays an essential role in neuronal development in terms of integrity and connectivity of neurons. The polypeptide is V-type proton ATPase 116 kDa subunit a 1 (ATP6V0A1) (Bos taurus (Bovine)).